Here is a 437-residue protein sequence, read N- to C-terminus: UDP-N-acetylmuramate--L-alanine ligase (437 aa).

108–114 (GAHGKTS) contacts ATP.

It belongs to the MurCDEF family.

The protein localises to the cytoplasm. It catalyses the reaction UDP-N-acetyl-alpha-D-muramate + L-alanine + ATP = UDP-N-acetyl-alpha-D-muramoyl-L-alanine + ADP + phosphate + H(+). It functions in the pathway cell wall biogenesis; peptidoglycan biosynthesis. Its function is as follows. Cell wall formation. In Staphylococcus saprophyticus subsp. saprophyticus (strain ATCC 15305 / DSM 20229 / NCIMB 8711 / NCTC 7292 / S-41), this protein is UDP-N-acetylmuramate--L-alanine ligase.